A 368-amino-acid chain; its full sequence is Homoserine O-acetyltransferase (368 aa).

One can recognise an AB hydrolase-1 domain in the interval 43 to 346 (ILLEHALTGT…EYGHDAFLVE (304 aa)). S145 serves as the catalytic Nucleophile. A substrate-binding site is contributed by R212. Active-site residues include D307 and H340. D341 contacts substrate.

Belongs to the AB hydrolase superfamily. MetX family. Homodimer.

It localises to the cytoplasm. It carries out the reaction L-homoserine + acetyl-CoA = O-acetyl-L-homoserine + CoA. It functions in the pathway amino-acid biosynthesis; L-methionine biosynthesis via de novo pathway; O-acetyl-L-homoserine from L-homoserine: step 1/1. Functionally, transfers an acetyl group from acetyl-CoA to L-homoserine, forming acetyl-L-homoserine. The chain is Homoserine O-acetyltransferase from Listeria monocytogenes serovar 1/2a (strain ATCC BAA-679 / EGD-e).